The primary structure comprises 120 residues: NAD(P)H-quinone oxidoreductase subunit 3 (120 aa).

3 consecutive transmembrane segments (helical) span residues Phe10–Ile30, Met64–Val84, and Leu89–Ala109.

The protein belongs to the complex I subunit 3 family. As to quaternary structure, NDH-1 can be composed of about 15 different subunits; different subcomplexes with different compositions have been identified which probably have different functions.

It localises to the cellular thylakoid membrane. It catalyses the reaction a plastoquinone + NADH + (n+1) H(+)(in) = a plastoquinol + NAD(+) + n H(+)(out). The enzyme catalyses a plastoquinone + NADPH + (n+1) H(+)(in) = a plastoquinol + NADP(+) + n H(+)(out). In terms of biological role, NDH-1 shuttles electrons from an unknown electron donor, via FMN and iron-sulfur (Fe-S) centers, to quinones in the respiratory and/or the photosynthetic chain. The immediate electron acceptor for the enzyme in this species is believed to be plastoquinone. Couples the redox reaction to proton translocation, and thus conserves the redox energy in a proton gradient. Cyanobacterial NDH-1 also plays a role in inorganic carbon-concentration. In Prochlorococcus marinus (strain AS9601), this protein is NAD(P)H-quinone oxidoreductase subunit 3.